Consider the following 393-residue polypeptide: Squamosa promoter-binding-like protein 17 (393 aa).

Positions 40-49 (AAAVESSSTS) are enriched in low complexity. The segment at 40–67 (AAAVESSSTSSGGGGKKGKGVAAAAAPP) is disordered. The segment at 71 to 148 (PPRCQVEGCG…AGHNERRRKP (78 aa)) adopts an SBP-type zinc-finger fold. Zn(2+)-binding residues include Cys-74, Cys-79, Cys-96, His-99, Cys-115, Cys-118, His-122, and Cys-134. Positions 131-147 (KKSCRRRLAGHNERRRK) match the Bipartite nuclear localization signal motif. The span at 137–148 (RLAGHNERRRKP) shows a compositional bias: basic residues. Disordered regions lie at residues 137 to 158 (RLAG…SRYG), 273 to 301 (WDTT…GNNP), and 317 to 393 (GWNS…NWSL). 2 stretches are compositionally biased toward polar residues: residues 273–293 (WDTT…STAS) and 380–393 (GAFS…NWSL).

Expressed in young panicles.

It localises to the nucleus. In terms of biological role, trans-acting factor that binds specifically to the consensus nucleotide sequence 5'-TNCGTACAA-3'. May be involved in panicle development. This chain is Squamosa promoter-binding-like protein 17 (SPL17), found in Oryza sativa subsp. japonica (Rice).